Reading from the N-terminus, the 129-residue chain is Follitropin subunit beta (129 aa).

The first 20 residues, 1-20 (MKTLQFFFLFCCWKAICCNS), serve as a signal peptide directing secretion. Disulfide bonds link Cys21–Cys69, Cys35–Cys84, Cys38–Cys122, Cys46–Cys100, Cys50–Cys102, and Cys105–Cys112. Asn25 and Asn42 each carry an N-linked (GlcNAc...) asparagine glycan.

This sequence belongs to the glycoprotein hormones subunit beta family. In terms of assembly, heterodimer. The active follitropin is a heterodimer composed of an alpha chain/CGA shared with other hormones and a unique beta chain/FSHB shown here.

It localises to the secreted. Together with the alpha chain CGA constitutes follitropin, the follicle-stimulating hormone, and provides its biological specificity to the hormone heterodimer. Binds FSHR, a G protein-coupled receptor, on target cells to activate downstream signaling pathways. Follitropin is involved in follicle development and spermatogenesis in reproductive organs. This Gorilla gorilla gorilla (Western lowland gorilla) protein is Follitropin subunit beta (FSHB).